An 88-amino-acid polypeptide reads, in one-letter code: Large ribosomal subunit protein bL31B (88 aa).

This sequence belongs to the bacterial ribosomal protein bL31 family. Type B subfamily. In terms of assembly, part of the 50S ribosomal subunit.

The polypeptide is Large ribosomal subunit protein bL31B (Bordetella pertussis (strain Tohama I / ATCC BAA-589 / NCTC 13251)).